Consider the following 69-residue polypeptide: DNA gyrase inhibitor YacG (69 aa).

The Zn(2+) site is built by Cys-7, Cys-10, Cys-26, and Cys-30.

The protein belongs to the DNA gyrase inhibitor YacG family. As to quaternary structure, interacts with GyrB. The cofactor is Zn(2+).

Functionally, inhibits all the catalytic activities of DNA gyrase by preventing its interaction with DNA. Acts by binding directly to the C-terminal domain of GyrB, which probably disrupts DNA binding by the gyrase. The protein is DNA gyrase inhibitor YacG of Shewanella baltica (strain OS155 / ATCC BAA-1091).